Here is a 467-residue protein sequence, read N- to C-terminus: 3-isopropylmalate dehydratase large subunit (467 aa).

Residues Cys349, Cys408, and Cys411 each contribute to the [4Fe-4S] cluster site.

It belongs to the aconitase/IPM isomerase family. LeuC type 1 subfamily. In terms of assembly, heterodimer of LeuC and LeuD. [4Fe-4S] cluster is required as a cofactor.

It catalyses the reaction (2R,3S)-3-isopropylmalate = (2S)-2-isopropylmalate. It functions in the pathway amino-acid biosynthesis; L-leucine biosynthesis; L-leucine from 3-methyl-2-oxobutanoate: step 2/4. Functionally, catalyzes the isomerization between 2-isopropylmalate and 3-isopropylmalate, via the formation of 2-isopropylmaleate. The chain is 3-isopropylmalate dehydratase large subunit from Dinoroseobacter shibae (strain DSM 16493 / NCIMB 14021 / DFL 12).